The sequence spans 607 residues: MKWVTFVSLLFLFSSAYSRGVLRRDTHKSEIAHRFNDLGEKHFKGLVLVAFSQYLQQCPFEDHVKLVNEVTEFAKKCAADESAENCDKSLHTLFGDKLCTVATLRATYGELADCCEKQEPERNECFLTHKDDHPNLPKLKPEPDAQCAAFQEDPDKFLGKYLYEVARRHPYFYGPELLFHAEEYKADFTECCPADDKLACLIPKLDALKERILLSSAKERLKCSSFQNFGERAVKAWSVARLSQKFPKADFAEVSKIVTDLTKVHKECCHGDLLECADDRADLAKYICEHQDSISGKLKACCDKPLLQKSHCIAEVKEDDLPSDLPALAADFAEDKEICKHYKDAKDVFLGTFLYEYSRRHPDYSVSLLLRIAKTYEATLEKCCAEADPPACYRTVFDQFTPLVEEPKSLVKKNCDLFEEVGEYDFQNALIVRYTKKAPQVSTPTLVEIGRTLGKVGSRCCKLPESERLPCSENHLALALNRLCVLHEKTPVSEKITKCCTDSLAERRPCFSALELDEGYVPKEFKAETFTFHADICTLPEDEKQIKKQSALAELVKHKPKATKEQLKTVLGNFSAFVAKCCGREDKEACFAEEGPKLVASSQLALA.

The first 18 residues, M1–S18, serve as a signal peptide directing secretion. A propeptide spanning residues R19–R24 is cleaved from the precursor. Albumin domains lie at R19–K209, E210–P402, and L403–A600. Position 27 (H27) interacts with Cu cation. At S29 the chain carries Phosphoserine. 2 residues coordinate Ca(2+): E30 and D37. C77 and C86 are oxidised to a cystine. Phosphoserine occurs at positions 82 and 89. H91 serves as a coordination point for Zn(2+). Disulfide bonds link C99–C115, C114–C125, C147–C192, C191–C200, C223–C269, and C268–C276. Residue T107 is modified to Phosphothreonine. E267 lines the Ca(2+) pocket. H270 and D272 together coordinate Zn(2+). D272, E275, D278, and D282 together coordinate Ca(2+). 8 cysteine pairs are disulfide-bonded: C288–C302, C301–C312, C339–C384, C383–C392, C415–C461, C460–C471, C484–C500, and C499–C510. S442 bears the Phosphoserine mark. T443 and T445 each carry phosphothreonine. S512 is subject to Phosphoserine. Intrachain disulfides connect C537-C582 and C581-C590. N6-methyllysine is present on K557. T569 is modified (phosphothreonine). K587 is modified (N6-succinyllysine).

This sequence belongs to the ALB/AFP/VDB family. Interacts with FCGRT; this interaction regulates ALB homeostasis. Interacts with TASOR. In plasma, occurs in a covalently-linked complex with chromophore-bound alpha-1-microglobulin; this interaction does not prevent fatty acid binding to ALB. Post-translationally, phosphorylated by FAM20C in the extracellular medium. In terms of tissue distribution, plasma.

It localises to the secreted. Functionally, binds water, Ca(2+), Na(+), K(+), fatty acids, hormones, bilirubin and drugs. Its main function is the regulation of the colloidal osmotic pressure of blood. Major zinc transporter in plasma, typically binds about 80% of all plasma zinc. Major calcium and magnesium transporter in plasma, binds approximately 45% of circulating calcium and magnesium in plasma. Potentially has more than two calcium-binding sites and might additionally bind calcium in a non-specific manner. The shared binding site between zinc and calcium at residue Asp-272 suggests a crosstalk between zinc and calcium transport in the blood. The rank order of affinity is zinc &gt; calcium &gt; magnesium. Binds to the bacterial siderophore enterobactin and inhibits enterobactin-mediated iron uptake of E.coli from ferric transferrin, and may thereby limit the utilization of iron and growth of enteric bacteria such as E.coli. Does not prevent iron uptake by the bacterial siderophore aerobactin. This chain is Albumin (ALB), found in Equus caballus (Horse).